The primary structure comprises 740 residues: Ribosome-releasing factor 2, mitochondrial (740 aa).

The transit peptide at 1–29 (MLKYAWQSGPKQSNRWLWHLSNQIWKRSY) directs the protein to the mitochondrion. Residues 31-310 (SKIRNIGILA…AVNAYLPAPE (280 aa)) enclose the tr-type G domain. GTP is bound by residues 40–47 (AHIDAGKT), 104–108 (DTPGH), and 158–161 (NKMD).

The protein belongs to the TRAFAC class translation factor GTPase superfamily. Classic translation factor GTPase family. EF-G/EF-2 subfamily.

It is found in the mitochondrion. Functionally, mitochondrial GTPase that mediates the disassembly of ribosomes from messenger RNA at the termination of mitochondrial protein biosynthesis. Not involved in the GTP-dependent ribosomal translocation step during translation elongation. This chain is Ribosome-releasing factor 2, mitochondrial, found in Drosophila melanogaster (Fruit fly).